The following is a 1197-amino-acid chain: Sensor protein EvgS (1197 aa).

Positions 1-21 (MKFLPYIFLLCCGLWSTISFA) are cleaved as a signal peptide. Residues 22 to 325 (DEDYIEYRGI…SMTDENGSVR (304 aa)) lie on the Cytoplasmic side of the membrane. Residues 326–346 (GVMGDILNIITLQTGLNFSPI) traverse the membrane as a helical segment. Residues 347 to 537 (TVSHNIHAGT…TWDLYSEQFY (191 aa)) are Periplasmic-facing. The chain crosses the membrane as a helical span at residues 538–558 (IVTTLSVLLVGSSLLWGFYLL). The Cytoplasmic portion of the chain corresponds to 559–1197 (RSVRRRKVIQ…EIAVFCQQNN (639 aa)). In terms of domain architecture, Histidine kinase spans 718–938 (TMSHEIRTPI…TFTITIPVEI (221 aa)). H721 is subject to Phosphohistidine; by autocatalysis. The Response regulatory domain occupies 960-1074 (SILIADDHPT…VLKTHLSQLH (115 aa)). D1009 is modified (4-aspartylphosphate). The HPt domain maps to 1098–1197 (DLQLMQEILM…EIAVFCQQNN (100 aa)). H1137 carries the post-translational modification Phosphohistidine.

Post-translationally, activation requires a sequential transfer of a phosphate group from a His in the primary transmitter domain, to an Asp in the receiver domain and to a His in the secondary transmitter domain.

It is found in the cell inner membrane. The catalysed reaction is ATP + protein L-histidine = ADP + protein N-phospho-L-histidine.. Functionally, member of the two-component regulatory system EvgS/EvgA. Phosphorylates EvgA via a four-step phosphorelay in response to environmental signals. In Escherichia coli O157:H7, this protein is Sensor protein EvgS (evgS).